The primary structure comprises 133 residues: ATP synthase epsilon chain, chloroplastic (133 aa).

It belongs to the ATPase epsilon chain family. F-type ATPases have 2 components, CF(1) - the catalytic core - and CF(0) - the membrane proton channel. CF(1) has five subunits: alpha(3), beta(3), gamma(1), delta(1), epsilon(1). CF(0) has three main subunits: a, b and c.

It localises to the plastid. Its subcellular location is the chloroplast thylakoid membrane. In terms of biological role, produces ATP from ADP in the presence of a proton gradient across the membrane. In Eucalyptus globulus subsp. globulus (Tasmanian blue gum), this protein is ATP synthase epsilon chain, chloroplastic.